Consider the following 746-residue polypeptide: Proline--tRNA ligase (746 aa).

A required for editing of incorrectly charged tRNA region spans residues 1-223 (MNNNTNGEII…NSNNNNNNNN (223 aa)). Basic and acidic residues predominate over residues 181-201 (TSKARVDKKEDVQEEMAKNEE). The disordered stretch occupies residues 181-226 (TSKARVDKKEDVQEEMAKNEELQNNNNNNKNNSNSNNNNNNNNNHI). The segment covering 204–224 (NNNNNNKNNSNSNNNNNNNNN) has biased composition (low complexity). Residue R390 coordinates L-proline. ATP contacts are provided by residues 390-394 (RWEFK), 401-405 (RTREF), and 475-477 (QAA). H480 contributes to the L-proline binding site. Position 512 to 514 (512 to 514 (TTR)) interacts with ATP.

This sequence belongs to the class-II aminoacyl-tRNA synthetase family. ProS type 3 subfamily. As to quaternary structure, homodimer.

The protein localises to the cytoplasm. It carries out the reaction tRNA(Pro) + L-proline + ATP = L-prolyl-tRNA(Pro) + AMP + diphosphate. Inhibited by the quinazolinone-based compound febrifugine from the Chinese plant Dichroa febrifuga which is used to treat malaria-associated fever. Also inhibited by febrifugine derivatives such as halofuginone. In terms of biological role, catalyzes the attachment of proline to tRNA(Pro) in a two-step reaction: proline is first activated by ATP to form Pro-AMP and then transferred to the acceptor end of tRNA(Pro). Functions in trans to edit the amino acid moiety from incorrectly charged Ala-tRNA(Pro). Has no activity on correctly charged Pro-tRNA(Pro) or Ala-tRNA(Ala). The protein is Proline--tRNA ligase of Plasmodium falciparum (isolate 3D7).